The sequence spans 526 residues: G-protein coupled receptor 161 (526 aa).

Residues 1 to 27 lie on the Extracellular side of the membrane; that stretch reads MNGSKNGTAVANSTNGLDDNGLMVLES. 3 N-linked (GlcNAc...) asparagine glycosylation sites follow: asparagine 2, asparagine 6, and asparagine 12. The chain crosses the membrane as a helical span at residues 28–48; that stretch reads VSIIIIAILACLGNLVIVVTL. The Cytoplasmic segment spans residues 49 to 60; sequence YKKPYLLTPSNK. A helical membrane pass occupies residues 61-81; that stretch reads FVFSLTSSNLLLSVLMLPFVV. The Extracellular segment spans residues 82 to 98; it reads ASSVRRDWMFGVVWCNF. Residues cysteine 96 and cysteine 174 are joined by a disulfide bond. An N-linked (GlcNAc...) asparagine glycan is attached at asparagine 97. A helical transmembrane segment spans residues 99–119; that stretch reads TALLHLLVSSSSMLTLGAIAI. The Cytoplasmic segment spans residues 120–139; sequence DRYYAVLYPMIYPMKITGNR. A helical transmembrane segment spans residues 140–160; it reads AVLAIVYIWLHSLVGCLPPLF. Topologically, residues 161–186 are extracellular; sequence GWSSFEFDRFKWTCTVSWHKEISYTA. Residues 187–207 traverse the membrane as a helical segment; that stretch reads FWVTWCCLLPLVAMLVCYGVI. The Cytoplasmic segment spans residues 208 to 263; the sequence is FRVARIKARKVYCGSVVVSQEESSSQNNGRKNSNTSTSSSGSRKSLIYSGSQCKAF. Residues 231–250 are disordered; it reads SSQNNGRKNSNTSTSSSGSR. The helical transmembrane segment at 264 to 284 threads the bilayer; the sequence is ITILVVLGTFLTTWGPYVVVI. Residues 285–300 are Extracellular-facing; the sequence is STEALLGKNSVSPQVE. Residues 301-321 form a helical membrane-spanning segment; that stretch reads TLVSWLSFTSAVCHPLIYGLW. Residues 322–526 lie on the Cytoplasmic side of the membrane; that stretch reads NKTVRKELLG…EEEMEREEKM (205 aa). The disordered stretch occupies residues 505–526; sequence IDEGIVKDDDDDEEEMEREEKM. Residues 512-526 show a composition bias toward acidic residues; it reads DDDDDEEEMEREEKM.

Belongs to the G-protein coupled receptor 1 family.

Its subcellular location is the cell projection. The protein localises to the cilium membrane. It localises to the cell membrane. In terms of biological role, key negative regulator of Shh signaling during neural tube development. Recruited to primary cilia and acts as a regulator of the PKA-dependent basal repression machinery in Shh signaling by increasing cAMP levels, leading to promote the PKA-dependent processing of gli3 into gli3r and repress the Shh signaling. In presence of shh, it is removed from primary cilia, preventing its activity and allowing activation of the Shh signaling. Required in left/right patterning by modulating Ca(2+) levels in the cells surrounding the Kupffer vesicle. The chain is G-protein coupled receptor 161 (gpr161) from Danio rerio (Zebrafish).